A 178-amino-acid chain; its full sequence is MAAQIIEILSPEEIRRTLTRLASQVIEKNSDLSELVLLGIYTRGVPLAHQLAQQIEMLEQVKVPVGAIDVTLYRDDLKRIKTRTPAKTKIPLSLTGKRVVLVDDVIYKGRTIRAALNAVTEYGRPQVIRLLTLVDRGHRELPIHPDFVGKILPTAAEEQVKVYLQDPDGRDTVELIKG.

Residues 42–43 (TR), arginine 83, 103–111 (DDVIYKGRT), arginine 136, and valine 160 each bind substrate. A PRPP-binding motif is present at residues 99 to 111 (VVLVDDVIYKGRT).

The protein belongs to the purine/pyrimidine phosphoribosyltransferase family. PyrR subfamily.

It catalyses the reaction UMP + diphosphate = 5-phospho-alpha-D-ribose 1-diphosphate + uracil. Its function is as follows. Regulates the transcription of the pyrimidine nucleotide (pyr) operon in response to exogenous pyrimidines. In terms of biological role, also displays a weak uracil phosphoribosyltransferase activity which is not physiologically significant. This chain is Bifunctional protein PyrR, found in Synechocystis sp. (strain ATCC 27184 / PCC 6803 / Kazusa).